Here is a 192-residue protein sequence, read N- to C-terminus: Adenylate kinase (192 aa).

10-18 (GVPGVGGTT) contacts ATP.

This sequence belongs to the archaeal adenylate kinase family. In terms of assembly, monomer.

It is found in the cytoplasm. The enzyme catalyses AMP + ATP = 2 ADP. The polypeptide is Adenylate kinase (adkA) (Methanothermococcus thermolithotrophicus (Methanococcus thermolithotrophicus)).